Here is a 719-residue protein sequence, read N- to C-terminus: DNA ligase (719 aa).

NAD(+) contacts are provided by residues 42 to 46 (DAAYD), 92 to 93 (SL), and Glu-126. The active-site N6-AMP-lysine intermediate is the Lys-128. NAD(+) contacts are provided by Arg-149, Glu-185, Lys-301, and Lys-325. Positions 430, 433, 448, and 454 each coordinate Zn(2+). A BRCT domain is found at 640–719 (ATGSPVEGKT…DDWFKLVGED (80 aa)).

It belongs to the NAD-dependent DNA ligase family. LigA subfamily. Mg(2+) is required as a cofactor. It depends on Mn(2+) as a cofactor.

It carries out the reaction NAD(+) + (deoxyribonucleotide)n-3'-hydroxyl + 5'-phospho-(deoxyribonucleotide)m = (deoxyribonucleotide)n+m + AMP + beta-nicotinamide D-nucleotide.. Functionally, DNA ligase that catalyzes the formation of phosphodiester linkages between 5'-phosphoryl and 3'-hydroxyl groups in double-stranded DNA using NAD as a coenzyme and as the energy source for the reaction. It is essential for DNA replication and repair of damaged DNA. This Brucella melitensis biotype 1 (strain ATCC 23456 / CCUG 17765 / NCTC 10094 / 16M) protein is DNA ligase.